We begin with the raw amino-acid sequence, 199 residues long: Putative peroxiredoxin ycf42 (199 aa).

One can recognise a Thioredoxin domain in the interval 8–165 (LQVGQIAPDF…TLRVLQAIQY (158 aa)). C53 functions as the Cysteine sulfenic acid (-SOH) intermediate in the catalytic mechanism.

It belongs to the peroxiredoxin family. AhpC/Prx1 subfamily. In terms of assembly, homodimer; disulfide-linked, upon oxidation. Post-translationally, the Cys-53-SH group is the primary site of oxidation by H(2)O(2), and the oxidized Cys-53 (probably Cys-SOH) rapidly reacts with Cys-174-SH of the other subunit to form an intermolecular disulfide. This disulfide is subsequently reduced by thioredoxin.

The protein resides in the plastid. Its subcellular location is the chloroplast. The catalysed reaction is a hydroperoxide + [thioredoxin]-dithiol = an alcohol + [thioredoxin]-disulfide + H2O. Functionally, thiol-specific peroxidase that catalyzes the reduction of hydrogen peroxide and organic hydroperoxides to water and alcohols, respectively. Plays a role in cell protection against oxidative stress by detoxifying peroxides. The protein is Putative peroxiredoxin ycf42 (ycf42) of Porphyra purpurea (Red seaweed).